The following is a 275-amino-acid chain: Translation initiation factor 2 subunit alpha (275 aa).

The S1 motif domain maps to 12–83 (GEFVVATVKR…RKGHIDLSLR (72 aa)).

This sequence belongs to the eIF-2-alpha family. As to quaternary structure, heterotrimer composed of an alpha, a beta and a gamma chain.

EIF-2 functions in the early steps of protein synthesis by forming a ternary complex with GTP and initiator tRNA. The protein is Translation initiation factor 2 subunit alpha (eif2a) of Pyrococcus horikoshii (strain ATCC 700860 / DSM 12428 / JCM 9974 / NBRC 100139 / OT-3).